We begin with the raw amino-acid sequence, 727 residues long: Platelet endothelial cell adhesion molecule (727 aa).

The first 17 residues, Met1 to Ala17, serve as a signal peptide directing secretion. The Extracellular segment spans residues Glu18–Lys590. Ig-like C2-type domains lie at Gly40–Thr126, Gly135–Ser213, Pro225–Asn309, Pro315–Ile391, Gly413–Ser472, and Pro488–Thr578. Cys47 and Cys99 are joined by a disulfide. Residues Asn74 and Asn141 are each glycosylated (N-linked (GlcNAc...) asparagine). 2 disulfides stabilise this stretch: Cys142/Cys195 and Cys245/Cys293. N-linked (GlcNAc...) asparagine glycans are attached at residues Asn309, Asn345, Asn360, Asn424, and Asn540. 3 disulfides stabilise this stretch: Cys336–Cys375, Cys420–Cys465, and Cys512–Cys561. A helical membrane pass occupies residues Gly591–Ala609. Residues Lys610–Thr727 are Cytoplasmic-facing. Cys611 is lipidated: S-palmitoyl cysteine. A disordered region spans residues Ser642–Pro672. 2 consecutive short sequence motifs (ITIM motif) follow at residues Val677 to Val682 and Thr700 to Ile705. 2 positions are modified to phosphotyrosine; by FER: Tyr679 and Tyr702. Residues Thr698–Ser718 are membrane-bound segment which detaches upon phosphorylation. A may play a role in cytoprotective signaling region spans residues Pro710 to Thr727. Ser718 and Ser723 each carry phosphoserine.

In terms of assembly, trans-homodimer (via Ig-like C2-type 1 and Ig-like C2-type 2 domains); trans-homodimerization is required for cell-cell interaction. Forms a complex with BDKRB2 and GNAQ. Interacts with BDKRB2 and GNAQ. Interacts with PTPN11; Tyr-702 is critical for PTPN11 recruitment. Interacts with FER. Interacts with CD177; the interaction is Ca(2+)-dependent; the interaction is direct. Phosphorylated on Ser and Tyr residues by src kinases after cellular activation. Upon activation, phosphorylated on Ser-718 which probably initiates the dissociation of the membrane-interaction segment (residues 698-718) from the cell membrane allowing the sequential phosphorylation of Tyr-702 and Tyr-679. Constitutively phosphorylated on Ser-723 in resting platelets. Phosphorylated on tyrosine residues by FER and FES in response to FCER1 activation. In endothelial cells Fyn mediates mechanical-force (stretch or pull) induced tyrosine phosphorylation. Post-translationally, palmitoylation by ZDHHC21 is necessary for cell surface expression in endothelial cells and enrichment in membrane rafts. In terms of tissue distribution, expressed in lung and platelets (at protein level).

The protein resides in the cell membrane. It localises to the membrane raft. The protein localises to the cell junction. Its function is as follows. Cell adhesion molecule which is required for leukocyte transendothelial migration (TEM) under most inflammatory conditions. Tyr-679 plays a critical role in TEM and is required for efficient trafficking of PECAM1 to and from the lateral border recycling compartment (LBRC) and is also essential for the LBRC membrane to be targeted around migrating leukocytes. Trans-homophilic interaction may play a role in endothelial cell-cell adhesion via cell junctions. Heterophilic interaction with CD177 plays a role in transendothelial migration of neutrophils. Homophilic ligation of PECAM1 prevents macrophage-mediated phagocytosis of neighboring viable leukocytes by transmitting a detachment signal. Promotes macrophage-mediated phagocytosis of apoptotic leukocytes by tethering them to the phagocytic cells; PECAM1-mediated detachment signal appears to be disabled in apoptotic leukocytes. Modulates bradykinin receptor BDKRB2 activation. Regulates bradykinin- and hyperosmotic shock-induced ERK1/2 activation in endothelial cells. Induces susceptibility to atherosclerosis. The protein is Platelet endothelial cell adhesion molecule (Pecam1) of Mus musculus (Mouse).